Consider the following 116-residue polypeptide: Methionine-R-sulfoxide reductase B1 (116 aa).

A MsrB domain is found at 1-106 (MSFCSFFGGE…FSSSLKFIPK (106 aa)). Zn(2+) is bound by residues cysteine 23, cysteine 26, cysteine 71, and cysteine 74. Residue selenocysteine 95 is the Nucleophile of the active site. A non-standard amino acid (selenocysteine) is located at residue selenocysteine 95.

Belongs to the MsrB Met sulfoxide reductase family. Zn(2+) is required as a cofactor. Post-translationally, truncated MSRB1/SEPX1 proteins produced by failed UGA/Sec decoding are ubiquitinated by the CRL2(FEM1C) E3 ubiquitin-protein ligase complex.

The protein resides in the cytoplasm. The protein localises to the nucleus. Its subcellular location is the cytoskeleton. The enzyme catalyses L-methionyl-[protein] + [thioredoxin]-disulfide + H2O = L-methionyl-(R)-S-oxide-[protein] + [thioredoxin]-dithiol. It catalyses the reaction [thioredoxin]-disulfide + L-methionine + H2O = L-methionine (R)-S-oxide + [thioredoxin]-dithiol. In terms of biological role, methionine-sulfoxide reductase that specifically reduces methionine (R)-sulfoxide back to methionine. While in many cases, methionine oxidation is the result of random oxidation following oxidative stress, methionine oxidation is also a post-translational modification that takes place on specific residue. Acts as a regulator of actin assembly by reducing methionine (R)-sulfoxide mediated by MICALs (MICAL1, MICAL2 or MICAL3) on actin, thereby promoting filament repolymerization. Plays a role in innate immunity by reducing oxidized actin, leading to actin repolymerization in macrophages. The protein is Methionine-R-sulfoxide reductase B1 (Msrb1) of Rattus norvegicus (Rat).